We begin with the raw amino-acid sequence, 309 residues long: Protein FdhE (309 aa).

Belongs to the FdhE family.

The protein localises to the cytoplasm. Necessary for formate dehydrogenase activity. This chain is Protein FdhE, found in Escherichia coli O127:H6 (strain E2348/69 / EPEC).